The following is a 134-amino-acid chain: Small ribosomal subunit protein bS6 (134 aa).

A compositionally biased stretch (basic and acidic residues) spans 113–122; that stretch reads NKDIKEKEQP. The tract at residues 113 to 134 is disordered; that stretch reads NKDIKEKEQPSESNVDADLKVN.

Belongs to the bacterial ribosomal protein bS6 family.

In terms of biological role, binds together with bS18 to 16S ribosomal RNA. In Borrelia recurrentis (strain A1), this protein is Small ribosomal subunit protein bS6.